A 344-amino-acid polypeptide reads, in one-letter code: L-lactate dehydrogenase B (344 aa).

Residues 62-67 (DALPDK) and arginine 109 contribute to the NAD(+) site. Arginine 116, asparagine 148, and arginine 179 together coordinate substrate. Asparagine 148 is an NAD(+) binding site. Histidine 203 (proton acceptor) is an active-site residue. Substrate is bound at residue threonine 258.

The protein belongs to the LDH/MDH superfamily. LDH family. As to quaternary structure, tetramer that arise from random association of LDH-A and LDH-B.

The catalysed reaction is (S)-lactate + NAD(+) = pyruvate + NADH + H(+). The protein operates within fermentation; pyruvate fermentation to lactate; (S)-lactate from pyruvate: step 1/1. The protein is L-lactate dehydrogenase B of Hordeum vulgare (Barley).